The primary structure comprises 138 residues: Basic phospholipase A2 Pla2Vb (138 aa).

A signal peptide spans 1 to 16 (MRTLWIVAVWLMGVEG). 7 cysteine pairs are disulfide-bonded: C42-C131, C44-C60, C59-C111, C65-C138, C66-C104, C73-C97, and C91-C102. Ca(2+)-binding residues include Y43, G45, and G47. Residue H63 is part of the active site. A Ca(2+)-binding site is contributed by D64. D105 is an active-site residue.

Belongs to the phospholipase A2 family. Group II subfamily. D49 sub-subfamily. Ca(2+) serves as cofactor. In terms of tissue distribution, expressed by the venom gland.

The protein localises to the secreted. The enzyme catalyses a 1,2-diacyl-sn-glycero-3-phosphocholine + H2O = a 1-acyl-sn-glycero-3-phosphocholine + a fatty acid + H(+). Snake venom phospholipase A2 (PLA2) that exhibits medium anticoagulant effects by binding to factor Xa (F10) and inhibiting the prothrombinase activity (IC(50) is 90 nM). PLA2 catalyzes the calcium-dependent hydrolysis of the 2-acyl groups in 3-sn-phosphoglycerides. This chain is Basic phospholipase A2 Pla2Vb, found in Vipera berus berus (Common viper).